The sequence spans 474 residues: Probable phenylalanine--tRNA ligase alpha subunit (474 aa).

The tract at residues 1-150 is contains the major tRNA-Phe binding sites; that stretch reads MSLSQKILEL…KRKLIYQAKE (150 aa). L-phenylalanine is bound by residues T308, 350–352, and Y390; that span reads QVE. E392 is a Mg(2+) binding site. F416 serves as a coordination point for L-phenylalanine.

This sequence belongs to the class-II aminoacyl-tRNA synthetase family. Phe-tRNA synthetase alpha subunit type 2 subfamily. Tetramer of two alpha and two beta subunits. Mg(2+) is required as a cofactor.

It is found in the cytoplasm. It carries out the reaction tRNA(Phe) + L-phenylalanine + ATP = L-phenylalanyl-tRNA(Phe) + AMP + diphosphate + H(+). In Vairimorpha ceranae (strain BRL01) (Microsporidian parasite), this protein is Probable phenylalanine--tRNA ligase alpha subunit.